A 409-amino-acid polypeptide reads, in one-letter code: Casein kinase II subunit alpha-1 (409 aa).

An N-terminal signal peptide occupies residues 1–35; the sequence is MIDTLFFLFFLFFDSPLRRLLLLCAVLALRAPTAH. N-linked (GlcNAc...) asparagine glycosylation occurs at Asn-72. Positions 110-395 constitute a Protein kinase domain; that stretch reads YEVVRKVGRG…AKEAMAHAYF (286 aa). Residues 116 to 124 and Lys-139 contribute to the ATP site; that span reads VGRGKYSEV. N-linked (GlcNAc...) asparagine glycosylation is present at Asn-188. The active-site Proton acceptor is Asp-227.

The protein belongs to the protein kinase superfamily. Ser/Thr protein kinase family. CK2 subfamily. In terms of assembly, heterotetramer of two catalytic alpha subunits and two regulatory beta subunits. As to expression, seems to be present in all plant organs. But seems to be less expressed than CKA2.

The protein resides in the nucleus. The protein localises to the nucleolus. The enzyme catalyses L-seryl-[protein] + ATP = O-phospho-L-seryl-[protein] + ADP + H(+). It catalyses the reaction L-threonyl-[protein] + ATP = O-phospho-L-threonyl-[protein] + ADP + H(+). With respect to regulation, inhibited by heparin. Its function is as follows. Casein kinases are operationally defined by their preferential utilization of acidic proteins such as caseins as substrates. Phosphorylates casein in vitro. The alpha chain contains the catalytic site. The tetrameric holoenzyme CK2, composed of two alpha and two beta subunits, phosphorylates the transcription factor GBFl, resulting in stimulation of its DNA binding activity. CK2 phosphorylates the transcription factor PIF1 after an exposure to light, resulting in a proteasome-dependent degradation of PIF1 and promotion of photomorphogenesis. CK2 phosphorylates translation initiation factors. May participate in the regulation of the initiation of translation. Acts as a circadian clock component that maintains the correct period length through phosphorylation of CCA1. Required for the maintenance and control of genomic stability and chromatin structure. May act as an ectokinase that phosphorylates several extracellular proteins. The protein is Casein kinase II subunit alpha-1 of Arabidopsis thaliana (Mouse-ear cress).